A 218-amino-acid chain; its full sequence is MALVPYTETAEMGLQRFHKPLATFSFANHTIQIRQDWKQLGVAAVVWDAAVVLATYLEMGTVELRGCSAVELGAGTGLVGIVAALLGAHVTITDRKVALEFLKSNVQANLPPHIQPKAVVKELTWGQNLGRFSPGEFDLILGADIIYLEETFTDLLQTLEHLCSNHSVVLLACRIRYERDYNFLAMLERQFTVSKVHYDSEKDVHIYKAQRRCLREDL.

S-adenosyl-L-methionine-binding positions include tryptophan 47, 73–75 (GAG), aspartate 94, tryptophan 125, and alanine 143.

This sequence belongs to the methyltransferase superfamily. METTL21 family. In terms of assembly, interacts with heat shock 70 family members; at least some of these proteins are methylation substrates.

Its subcellular location is the cytoplasm. It carries out the reaction L-lysyl-[protein] + 3 S-adenosyl-L-methionine = N(6),N(6),N(6)-trimethyl-L-lysyl-[protein] + 3 S-adenosyl-L-homocysteine + 3 H(+). In terms of biological role, protein-lysine methyltransferase that selectively trimethylates residues in heat shock protein 70 (HSP70) family members. Contributes to the in vivo trimethylation of Lys residues in HSPA1 and HSPA8. In vitro methylates 'Lys-561' in HSPA1, 'Lys-564' in HSPA2, 'Lys-585' in HSPA5, 'Lys-563' in HSPA6 and 'Lys-561' in HSPA8. This chain is Protein N-lysine methyltransferase METTL21A (METTL21A), found in Bos taurus (Bovine).